The following is a 1208-amino-acid chain: DNA-directed RNA polymerase subunit beta (1208 aa).

Positions 1182 to 1208 (EKKAAEQVEDEKDDVIQNFETAEDNLD) are disordered.

This sequence belongs to the RNA polymerase beta chain family. As to quaternary structure, the RNAP catalytic core consists of 2 alpha, 1 beta, 1 beta' and 1 omega subunit. When a sigma factor is associated with the core the holoenzyme is formed, which can initiate transcription.

It catalyses the reaction RNA(n) + a ribonucleoside 5'-triphosphate = RNA(n+1) + diphosphate. DNA-dependent RNA polymerase catalyzes the transcription of DNA into RNA using the four ribonucleoside triphosphates as substrates. This Enterococcus faecium (Streptococcus faecium) protein is DNA-directed RNA polymerase subunit beta.